Reading from the N-terminus, the 369-residue chain is Peptidyl-prolyl cis-trans isomerase D (369 aa).

One can recognise a PPIase cyclophilin-type domain in the interval Tyr8–Ile173. 3 TPR repeats span residues Val218–Tyr251, Val269–Asp302, and Ala306–Asp339.

This sequence belongs to the cyclophilin-type PPIase family. PPIase D subfamily.

It is found in the cytoplasm. It carries out the reaction [protein]-peptidylproline (omega=180) = [protein]-peptidylproline (omega=0). In terms of biological role, PPIases accelerate the folding of proteins. It catalyzes the cis-trans isomerization of proline imidic peptide bonds in oligopeptides. This chain is Peptidyl-prolyl cis-trans isomerase D (CPR6), found in Eremothecium gossypii (strain ATCC 10895 / CBS 109.51 / FGSC 9923 / NRRL Y-1056) (Yeast).